A 169-amino-acid chain; its full sequence is Large ribosomal subunit protein uL23 (169 aa).

The segment at 1 to 20 (MAGKKVKSNTPKQDLSVSKS) is disordered. The segment covering 8–20 (SNTPKQDLSVSKS) has biased composition (polar residues).

The protein belongs to the universal ribosomal protein uL23 family.

This protein binds to a specific region on the 26S rRNA. The protein is Large ribosomal subunit protein uL23 (rpl23a) of Dictyostelium discoideum (Social amoeba).